Here is a 429-residue protein sequence, read N- to C-terminus: Adenylosuccinate synthetase (429 aa).

GTP is bound by residues 12 to 18 (GDEGKGK) and 40 to 42 (GHT). Asp13 acts as the Proton acceptor in catalysis. Mg(2+) contacts are provided by Asp13 and Gly40. IMP is bound by residues 13-16 (DEGK), 38-41 (NAGH), Thr128, Arg142, Gln223, Thr238, and Arg302. His41 (proton donor) is an active-site residue. 298 to 304 (TTTGRPR) provides a ligand contact to substrate. Residues Arg304, 330–332 (SID), and 412–414 (SVG) contribute to the GTP site.

This sequence belongs to the adenylosuccinate synthetase family. In terms of assembly, homodimer. Mg(2+) is required as a cofactor.

It localises to the cytoplasm. The catalysed reaction is IMP + L-aspartate + GTP = N(6)-(1,2-dicarboxyethyl)-AMP + GDP + phosphate + 2 H(+). It participates in purine metabolism; AMP biosynthesis via de novo pathway; AMP from IMP: step 1/2. In terms of biological role, plays an important role in the de novo pathway of purine nucleotide biosynthesis. Catalyzes the first committed step in the biosynthesis of AMP from IMP. The chain is Adenylosuccinate synthetase from Lysinibacillus sphaericus (strain C3-41).